The primary structure comprises 202 residues: Dephospho-CoA kinase (202 aa).

The region spanning 5 to 202 (IVGLTGGIAS…DADYRARANP (198 aa)) is the DPCK domain. Position 13 to 18 (13 to 18 (ASGKSA)) interacts with ATP.

It belongs to the CoaE family.

It is found in the cytoplasm. The catalysed reaction is 3'-dephospho-CoA + ATP = ADP + CoA + H(+). Its pathway is cofactor biosynthesis; coenzyme A biosynthesis; CoA from (R)-pantothenate: step 5/5. In terms of biological role, catalyzes the phosphorylation of the 3'-hydroxyl group of dephosphocoenzyme A to form coenzyme A. The protein is Dephospho-CoA kinase of Xanthomonas axonopodis pv. citri (strain 306).